The primary structure comprises 300 residues: Protein orai (300 aa).

Over 1-128 (MPRSHDPSRV…SKAQLKASSR (128 aa)) the chain is Cytoplasmic. The interval 58–82 (QPPSSGGGSRNVGGGDGAAGNSKNG) is disordered. A compositionally biased stretch (gly residues) spans 62-75 (SGGGSRNVGGGDGA). The helical transmembrane segment at 129–146 (TSALLAGFAMVCLVELQY) threads the bilayer. At 147–153 (DDSTSKP) the chain is on the extracellular side. A helical membrane pass occupies residues 154–174 (LLIVLGVVTSLLVSVHLLALM). Residues 175 to 205 (MSTCILPYMEATGCTQDSPHLKLKFYIDLSW) lie on the Cytoplasmic side of the membrane. Residues 206–226 (LFSTCIGLLLFLVEIGVIFYV) form a helical membrane-spanning segment. Residues 227 to 237 (KFTAVGYPTAG) lie on the Extracellular side of the membrane. A helical transmembrane segment spans residues 238–258 (YITTAMLIPVGIVFVLFSYLI). Residues 259-300 (HKNRVSHSLGRFKDKVDTMKQFLDVEANLQKSTIAPSTIRDI) are Cytoplasmic-facing.

It belongs to the Orai family.

The protein localises to the membrane. In terms of biological role, ca(2+) release-activated Ca(2+)-like (CRAC-like) channel subunit which mediates Ca(2+) influx and increase in Ca(2+)-selective current by synergy with the Ca(2+) sensor, stim-1. Required for Ca(2+) and IP3-dependent contractile activity of sheath cells and the spermatheca. Affects brood size and somatic cell function. This is Protein orai (orai-1) from Caenorhabditis briggsae.